Consider the following 440-residue polypeptide: Replication factor C large subunit (440 aa).

48–55 (GPPGVGKT) lines the ATP pocket.

The protein belongs to the activator 1 small subunits family. RfcL subfamily. Heteromultimer composed of small subunits (RfcS) and large subunits (RfcL).

Its function is as follows. Part of the RFC clamp loader complex which loads the PCNA sliding clamp onto DNA. The polypeptide is Replication factor C large subunit (Sulfurisphaera tokodaii (strain DSM 16993 / JCM 10545 / NBRC 100140 / 7) (Sulfolobus tokodaii)).